Consider the following 265-residue polypeptide: NAD kinase 1 (265 aa).

Aspartate 45 functions as the Proton acceptor in the catalytic mechanism. NAD(+) is bound by residues 45 to 46 (DG), 122 to 123 (NE), arginine 148, aspartate 150, and alanine 185.

The protein belongs to the NAD kinase family. Requires a divalent metal cation as cofactor.

Its subcellular location is the cytoplasm. It carries out the reaction NAD(+) + ATP = ADP + NADP(+) + H(+). Involved in the regulation of the intracellular balance of NAD and NADP, and is a key enzyme in the biosynthesis of NADP. Catalyzes specifically the phosphorylation on 2'-hydroxyl of the adenosine moiety of NAD to yield NADP. This is NAD kinase 1 from Bacillus cereus (strain ATCC 10987 / NRS 248).